The chain runs to 482 residues: MSDPTEFSPPPPTSTDLPPGWLEVTAMDMDAQGVARKPDGKVVFIDGALPTELVSANTHRKKNNWEQASLTEVHRQSSQRVQPGCPHFGLHAGACGGCKMQHLHVAAQVAVKQRVLEDNLWHLGKVKAETILRPIEGPAWGYRYRARLSVRYVPKKDKVLVGFHERKSRYIADMETCKILPPHVDAMLMPLRALIGSMAARDTCPQIELACGDTVTALVLRHLEPLSPEDKDKLRAFAAVHGVQWWLQPKGPETVHLLDEGGEPLAYGLPDFGITMPFKPTDFTQVNPHINRVLVTRALRLLDARKDERVIDWFCGLGNFTLPIATQAREVLGIEGSEALVARSRENYQSNQAQRQDGSALAATSFVARNLFEMTPEMLIADGASDKWLVDPPREGAFALSKALADIHQARIGAEDAPPLPAGHEGWQPPRRIVYVSCNPATLARDAGLLVHQAGYRCVAAGVVNMFPHTAHVESMAVFERG.

Residues Cys85, Cys95, Cys98, and Cys177 each contribute to the [4Fe-4S] cluster site. Positions 285, 314, 319, 335, 370, and 391 each coordinate S-adenosyl-L-methionine. The active-site Nucleophile is Cys438.

It belongs to the class I-like SAM-binding methyltransferase superfamily. RNA M5U methyltransferase family. RlmD subfamily.

It carries out the reaction uridine(1939) in 23S rRNA + S-adenosyl-L-methionine = 5-methyluridine(1939) in 23S rRNA + S-adenosyl-L-homocysteine + H(+). In terms of biological role, catalyzes the formation of 5-methyl-uridine at position 1939 (m5U1939) in 23S rRNA. The chain is 23S rRNA (uracil(1939)-C(5))-methyltransferase RlmD from Acidovorax sp. (strain JS42).